We begin with the raw amino-acid sequence, 85 residues long: Neurotoxin 60.35 (85 aa).

Positions Met-1–Gly-23 are cleaved as a signal peptide. An LCN-type CS-alpha/beta domain is found at Tyr-24–Cys-85. Intrachain disulfides connect Cys-38–Cys-60, Cys-46–Cys-65, and Cys-50–Cys-67.

Belongs to the long (3 C-C) scorpion toxin superfamily. Expressed by the venom gland.

The protein resides in the secreted. This is Neurotoxin 60.35 from Lychas mucronatus (Chinese swimming scorpion).